A 1188-amino-acid polypeptide reads, in one-letter code: DNA polymerase (1188 aa).

The disordered stretch occupies residues 1–74; that stretch reads MALVPSPRAG…PAANNVSLTP (74 aa). Positions 31 to 41 are enriched in low complexity; that stretch reads STAGAAPTATR.

The protein belongs to the DNA polymerase type-B family. Heterodimer with the terminal protein; this heterodimer binds to bp 9 to 18 of the genome. Forms a complex with viral pTP, DBP and hosts NFIA and POU2F1/OCT1 for initiation of replication.

The protein localises to the host nucleus. It catalyses the reaction DNA(n) + a 2'-deoxyribonucleoside 5'-triphosphate = DNA(n+1) + diphosphate. Functionally, eukaryotic-type DNA polymerase involved in viral genomic replication. DNA synthesis is protein primed, and acts in a strand displacement replication. Assembles in complex with viral pTP, DBP, host NFIA and host POU2F1/OCT1 on viral origin of replication. The polymerase covalently transfers dCMP onto pTP, thereby initiating complementary strand synthesis. The polypeptide is DNA polymerase (Human adenovirus F serotype 40 (HAdV-40)).